The primary structure comprises 245 residues: Octopine transport system permease protein OccM (245 aa).

5 consecutive transmembrane segments (helical) span residues 12 to 32, 57 to 77, 96 to 116, 163 to 183, and 199 to 219; these read FIALLAGIPLALKLAVFSIAV, FYIFAFRGTPLLVQIYIIYYG, AYWCALGALALNTAAYSAEIM, VLMVKSTSLASTITLMEITGI, and ACAGAIYLTMNFIAARLFALI. Residues 19–216 enclose the ABC transmembrane type-1 domain; the sequence is IPLALKLAVF…TMNFIAARLF (198 aa).

Belongs to the binding-protein-dependent transport system permease family. HisMQ subfamily.

The protein resides in the cell inner membrane. Functionally, component of the octopine active transport system probably consisting of four subunits: Q, M, P and T. The protein is Octopine transport system permease protein OccM (occM) of Rhizobium meliloti (Ensifer meliloti).